The primary structure comprises 249 residues: 1-(5-phosphoribosyl)-5-[(5-phosphoribosylamino)methylideneamino] imidazole-4-carboxamide isomerase (249 aa).

Aspartate 11 serves as the catalytic Proton acceptor. The active-site Proton donor is aspartate 133.

It belongs to the HisA/HisF family.

It localises to the cytoplasm. The catalysed reaction is 1-(5-phospho-beta-D-ribosyl)-5-[(5-phospho-beta-D-ribosylamino)methylideneamino]imidazole-4-carboxamide = 5-[(5-phospho-1-deoxy-D-ribulos-1-ylimino)methylamino]-1-(5-phospho-beta-D-ribosyl)imidazole-4-carboxamide. It participates in amino-acid biosynthesis; L-histidine biosynthesis; L-histidine from 5-phospho-alpha-D-ribose 1-diphosphate: step 4/9. The protein is 1-(5-phosphoribosyl)-5-[(5-phosphoribosylamino)methylideneamino] imidazole-4-carboxamide isomerase of Actinobacillus succinogenes (strain ATCC 55618 / DSM 22257 / CCUG 43843 / 130Z).